We begin with the raw amino-acid sequence, 236 residues long: Phosphoribosylaminoimidazole-succinocarboxamide synthase (236 aa).

The protein belongs to the SAICAR synthetase family.

The enzyme catalyses 5-amino-1-(5-phospho-D-ribosyl)imidazole-4-carboxylate + L-aspartate + ATP = (2S)-2-[5-amino-1-(5-phospho-beta-D-ribosyl)imidazole-4-carboxamido]succinate + ADP + phosphate + 2 H(+). Its pathway is purine metabolism; IMP biosynthesis via de novo pathway; 5-amino-1-(5-phospho-D-ribosyl)imidazole-4-carboxamide from 5-amino-1-(5-phospho-D-ribosyl)imidazole-4-carboxylate: step 1/2. This chain is Phosphoribosylaminoimidazole-succinocarboxamide synthase, found in Rickettsia felis (strain ATCC VR-1525 / URRWXCal2) (Rickettsia azadi).